We begin with the raw amino-acid sequence, 508 residues long: Endo-4-O-sulfatase (508 aa).

Residue S84 is modified to 3-oxoalanine (Ser).

Belongs to the sulfatase family. In terms of processing, the conversion to 3-oxoalanine (also known as C-formylglycine, FGly), of a serine or cysteine residue in prokaryotes and of a cysteine residue in eukaryotes, is critical for catalytic activity.

Endosulfatase involved in the degradation of the glycosaminoglycans (GAGs) chondroitin sulfate (CS) and dermatan sulfate (DS). Efficiently hydrolyzes sulfate groups from a broad range of substrate size, including disaccharide to high molecular weight CS and DS polymers. Has a strict specificity for the 4-O-sulfate groups of galactosamine. GAG-specific sulfatases play a key role in the persistence of the major human gut symbiont B.thetaiotaomicron in the host gastrointestinal tract. This chain is Endo-4-O-sulfatase, found in Bacteroides thetaiotaomicron (strain ATCC 29148 / DSM 2079 / JCM 5827 / CCUG 10774 / NCTC 10582 / VPI-5482 / E50).